The sequence spans 239 residues: Large ribosomal subunit protein uL2 (239 aa).

It belongs to the universal ribosomal protein uL2 family.

It localises to the cytoplasm. The protein is Large ribosomal subunit protein uL2 (RPL8) of Encephalitozoon cuniculi (strain GB-M1) (Microsporidian parasite).